The primary structure comprises 87 residues: Small ribosomal subunit protein bS20 (87 aa).

A disordered region spans residues methionine 1–lysine 22.

Belongs to the bacterial ribosomal protein bS20 family.

In terms of biological role, binds directly to 16S ribosomal RNA. In Ruegeria sp. (strain TM1040) (Silicibacter sp.), this protein is Small ribosomal subunit protein bS20.